The chain runs to 470 residues: Desmin (470 aa).

The segment at 2–108 (SQAYSSSQRV…QEFLTTRTNE (107 aa)) is head. Ser7 carries the post-translational modification Phosphoserine; by CDK1. Phosphoserine; by AURKB is present on Ser12. The residue at position 16 (Arg16) is an Omega-N-methylarginine. Thr17 is modified (phosphothreonine; by AURKB and ROCK1). The residue at position 28 (Ser28) is a Phosphoserine; by CDK1. Ser31 is modified (phosphoserine). Phosphoserine; by CDK1 is present on Ser32. At Arg37 the chain carries Asymmetric dimethylarginine; alternate. At Arg37 the chain carries Omega-N-methylarginine; alternate. Ser45 bears the Phosphoserine mark. At Arg58 the chain carries ADP-ribosylarginine. Phosphoserine; by AURKB is present on Ser60. Arg70 carries the post-translational modification Omega-N-methylarginine. Thr77 bears the Phosphothreonine; by ROCK1 mark. Ser81 bears the Phosphoserine mark. In terms of domain architecture, IF rod spans 108-416 (EKVELQELND…KLLEGEESRI (309 aa)). Residues 109 to 141 (KVELQELNDRFANYIEKVRFLEQQNAALAAEVN) form a coil 1A region. Positions 142–151 (RLKGREPTRV) are linker 1. The segment at 152–252 (AEIYEEELRE…HEEEIRELQA (101 aa)) is coil 1B. Residues 253–268 (QLQEQQVQVEMDMSKP) form a linker 12 region. Residues 268–415 (PDLTAALRDI…RKLLEGEESR (148 aa)) form an interaction with NEB region. The tract at residues 269–287 (DLTAALRDIRAQYETIAAK) is coil 2A. A linker 2 region spans residues 288-295 (NISEAEEW). Ser290, Ser358, Ser361, and Ser424 each carry phosphoserine. The segment at 296-412 (YKSKVSDLTQ…ATYRKLLEGE (117 aa)) is coil 2B. The tract at residues 413–470 (ESRINLPIQTFSALNFRETSPEQRGSEVHTKKTVMIKTIETRDGEVVSEATQQQHEVL) is tail. The interaction with CRYAB stretch occupies residues 438 to 453 (SEVHTKKTVMIKTIET).

This sequence belongs to the intermediate filament family. In terms of assembly, homomer. Interacts with DST. Interacts with MTM1. Interacts with EPPK1; interaction is dependent of higher-order structure of intermediate filament. Interacts with CRYAB. Interacts with NEB (via nebulin repeats 160-164). Interacts (via rod region) with NEBL (via nebulin repeats 1-5). Interacts with ASB2; the interaction targets DES for proteasomal degradation. Interacts with PKP1. Interacts with FLII. Post-translationally, ADP-ribosylation prevents ability to form intermediate filaments. In terms of processing, phosphorylation at Ser-7, Ser-28 and Ser-32 by CDK1 and phosphorylation at Ser-60 by AURKB contribute to efficient separation of desmin intermediate filaments during mitosis. Ubiquitination by a SCF-like complex containing ASB2 leads to proteasomal degradation.

The protein localises to the cytoplasm. It localises to the myofibril. Its subcellular location is the sarcomere. The protein resides in the z line. It is found in the cell membrane. The protein localises to the sarcolemma. It localises to the nucleus. Its subcellular location is the cell tip. The protein resides in the nucleus envelope. Its function is as follows. Muscle-specific type III intermediate filament essential for proper muscular structure and function. Plays a crucial role in maintaining the structure of sarcomeres, inter-connecting the Z-disks and forming the myofibrils, linking them not only to the sarcolemmal cytoskeleton, but also to the nucleus and mitochondria, thus providing strength for the muscle fiber during activity. In adult striated muscle they form a fibrous network connecting myofibrils to each other and to the plasma membrane from the periphery of the Z-line structures. May act as a sarcomeric microtubule-anchoring protein: specifically associates with detyrosinated tubulin-alpha chains, leading to buckled microtubules and mechanical resistance to contraction. Required for nuclear membrane integrity, via anchoring at the cell tip and nuclear envelope, resulting in maintenance of microtubule-derived intracellular mechanical forces. Contributes to the transcriptional regulation of the NKX2-5 gene in cardiac progenitor cells during a short period of cardiomyogenesis and in cardiac side population stem cells in the adult. Plays a role in maintaining an optimal conformation of nebulette (NEB) on heart muscle sarcomeres to bind and recruit cardiac alpha-actin. This Bos taurus (Bovine) protein is Desmin (DES).